A 340-amino-acid chain; its full sequence is Uroporphyrinogen decarboxylase (340 aa).

Substrate-binding positions include 21–25, Phe40, Asp71, Tyr148, Ser203, and His316; that span reads RQAGR.

Belongs to the uroporphyrinogen decarboxylase family. In terms of assembly, homodimer.

Its subcellular location is the cytoplasm. The enzyme catalyses uroporphyrinogen III + 4 H(+) = coproporphyrinogen III + 4 CO2. It participates in porphyrin-containing compound metabolism; protoporphyrin-IX biosynthesis; coproporphyrinogen-III from 5-aminolevulinate: step 4/4. In terms of biological role, catalyzes the decarboxylation of four acetate groups of uroporphyrinogen-III to yield coproporphyrinogen-III. The protein is Uroporphyrinogen decarboxylase of Campylobacter jejuni subsp. jejuni serotype O:2 (strain ATCC 700819 / NCTC 11168).